Here is a 502-residue protein sequence, read N- to C-terminus: Alpha-ketoglutarate-dependent dioxygenase FTO (502 aa).

The segment at 32–324 is fe2OG dioxygenase domain; that stretch reads TPKDDEFYQQ…SSTHRVAECS (293 aa). Arginine 96 and tyrosine 108 together coordinate substrate. Residue asparagine 202 coordinates 2-oxoglutarate. Residues 210–221 form a loop L1; predicted to block binding of double-stranded DNA or RNA region; that stretch reads PYLKEEPYFGMG. Lysine 213 bears the N6-acetyllysine mark. Fe cation-binding residues include histidine 228 and aspartate 230. Residue 228–231 coordinates substrate; sequence HHDE. Tyrosine 292 contributes to the 2-oxoglutarate binding site. Histidine 304 is a binding site for Fe cation. 2-oxoglutarate contacts are provided by residues 313–315, threonine 317, and arginine 319; that span reads RFS.

Belongs to the fto family. As to quaternary structure, monomer. May also exist as homodimer. Fe(2+) is required as a cofactor. As to expression, ubiquitous. Highly expressed in teeth and weakly in bone.

It is found in the nucleus. It localises to the nucleus speckle. The protein localises to the cytoplasm. It carries out the reaction a 5'-end (N(7)-methyl 5'-triphosphoguanosine)-(N(6),2'-O-dimethyladenosine) in mRNA + 2-oxoglutarate + O2 = a 5'-end (N(7)-methyl 5'-triphosphoguanosine)-(2'-O-methyladenosine) in mRNA + formaldehyde + succinate + CO2. The catalysed reaction is an N(6)-methyladenosine in mRNA + 2-oxoglutarate + O2 = an adenosine in mRNA + formaldehyde + succinate + CO2. The enzyme catalyses N(6)-methyladenosine in U6 snRNA + 2-oxoglutarate + O2 = adenosine in U6 snRNA + formaldehyde + succinate + CO2. It catalyses the reaction a 5'-end (N(7)-methyl 5'-triphosphoguanosine)-(N(6),2'-O-dimethyladenosine) in U6 snRNA + 2-oxoglutarate + O2 = a 5'-end (N(7)-methyl 5'-triphosphoguanosine)-(2'-O-methyladenosine) in U6 snRNA + formaldehyde + succinate + CO2. It carries out the reaction an N(1)-methyladenosine in tRNA + 2-oxoglutarate + O2 = an adenosine in tRNA + formaldehyde + succinate + CO2. Its activity is regulated as follows. Activated by ascorbate. Inhibited by N-oxalylglycine, fumarate and succinate. RNA demethylase that mediates oxidative demethylation of different RNA species, such as mRNAs, tRNAs and snRNAs, and acts as a regulator of fat mass, adipogenesis and energy homeostasis. Specifically demethylates N(6)-methyladenosine (m6A) RNA, the most prevalent internal modification of messenger RNA (mRNA) in higher eukaryotes. M6A demethylation by FTO affects mRNA expression and stability. Also able to demethylate m6A in U6 small nuclear RNA (snRNA). Mediates demethylation of N(6),2'-O-dimethyladenosine cap (m6A(m)), by demethylating the N(6)-methyladenosine at the second transcribed position of mRNAs and U6 snRNA. Demethylation of m6A(m) in the 5'-cap by FTO affects mRNA stability by promoting susceptibility to decapping. Also acts as a tRNA demethylase by removing N(1)-methyladenine from various tRNAs. Has no activity towards 1-methylguanine. Has no detectable activity towards double-stranded DNA. Also able to repair alkylated DNA and RNA by oxidative demethylation: demethylates single-stranded RNA containing 3-methyluracil, single-stranded DNA containing 3-methylthymine and has low demethylase activity towards single-stranded DNA containing 1-methyladenine or 3-methylcytosine. Ability to repair alkylated DNA and RNA is however unsure in vivo. Involved in the regulation of fat mass, adipogenesis and body weight, thereby contributing to the regulation of body size and body fat accumulation. Involved in the regulation of thermogenesis and the control of adipocyte differentiation into brown or white fat cells. Regulates activity of the dopaminergic midbrain circuitry via its ability to demethylate m6A in mRNAs. This Rattus norvegicus (Rat) protein is Alpha-ketoglutarate-dependent dioxygenase FTO.